The following is a 2944-amino-acid chain: Collagen alpha-1(VII) chain (2944 aa).

A signal peptide spans 1–24 (MRLRLLVAALCAAEILMGAPEVWA). Residues 18 to 1254 (GAPEVWAQPR…TGPCAVHCPK (1237 aa)) form a nonhelical region (NC1) region. Positions 39 to 212 (DIVFLLDGSS…SILRTLLPLI (174 aa)) constitute a VWFA 1 domain. Fibronectin type-III domains follow at residues 235–330 (GPRD…TAKE), 331–417 (GLEL…TASS), 418–508 (VEQT…LEQL), 511–598 (PVMN…DPEA), 601–688 (VVPG…DPLG), 689–776 (PVRR…APEP), 779–867 (SVSK…PPAT), 870–957 (LLET…EPSH), and 959–1053 (PSTE…SHGP). N-linked (GlcNAc...) asparagine glycosylation occurs at asparagine 338. An N-linked (GlcNAc...) asparagine glycan is attached at asparagine 787. The 176-residue stretch at 1055 to 1230 (DVVFLLHATR…PGLDRAVSDL (176 aa)) folds into the VWFA 2 domain. Asparagine 1110 carries N-linked (GlcNAc...) asparagine glycosylation. The short motif at 1171-1173 (RGD) is the Cell attachment site element. The interval 1255-1475 (GQKGEPGVTG…GLRGAPGMTG (221 aa)) is interrupted collagenous region. The tract at residues 1255–2775 (GQKGEPGVTG…GPRGEKGEAA (1521 aa)) is triple-helical region. Disordered stretches follow at residues 1259–1934 (EPGV…GSLP) and 1960–2773 (SSGS…EKGE). Over residues 1338–1352 (RGPQGPKGEPGEPGQ) the composition is skewed to low complexity. Positions 1353–1363 (ITGGGGPGFPG) are enriched in gly residues. Composition is skewed to basic and acidic residues over residues 1397 to 1406 (KGDKGDRGER) and 1439 to 1448 (PGEKGEKGDC). A compositionally biased stretch (low complexity) spans 1507–1518 (PGAAGHPGVEGP). Basic and acidic residues-rich tracts occupy residues 1527 to 1536 (RRGEKGEPGR), 1627 to 1639 (RGRD…KGDE), and 1666 to 1680 (VGEK…EDGR). The span at 1813 to 1822 (PPGPPGPPGV) shows a compositional bias: pro residues. Composition is skewed to basic and acidic residues over residues 1846 to 1855 (EDGRKGEKGD), 1862 to 1871 (EGPDGPKGER), and 1968 to 1984 (PERR…RGPP). A Cell attachment site motif is present at residues 2002-2004 (RGD). Positions 2040–2049 (GRAGGSGEAG) are enriched in gly residues. Over residues 2050–2068 (RPGERGERGEKGERGDQGR) the composition is skewed to basic and acidic residues. A Cell attachment site motif is present at residues 2063 to 2065 (RGD). Positions 2074–2083 (LPGPPGPPGP) are enriched in pro residues. Positions 2130 to 2140 (DVGEPGKRGHD) are enriched in basic and acidic residues. Proline 2158, proline 2167, proline 2176, and proline 2179 each carry 4-hydroxyproline. Low complexity-rich tracts occupy residues 2182–2197 (PGLA…SGLK), 2226–2241 (SGLV…PGQV), 2279–2299 (PKGE…PPGA), and 2306–2317 (PGDLAGALLGEP). Basic and acidic residues predominate over residues 2319 to 2335 (AKGDRGLPGPRGEKGEA). Over residues 2414–2427 (ERGLAGPPGREGAP) the composition is skewed to low complexity. Composition is skewed to basic and acidic residues over residues 2462 to 2477 (RGER…DGHP) and 2525 to 2544 (AKGD…KGPR). Residues 2576 to 2594 (PKGEPGAAGIPGEPGAPGK) show a composition bias toward low complexity. A Cell attachment site motif is present at residues 2601–2603 (RGD). Over residues 2615 to 2636 (LKGEKGIKGTCGRDGERGDKGE) the composition is skewed to basic and acidic residues. Residues lysine 2616 and lysine 2622 each carry the 5-hydroxylysine modification. The Cell attachment site signature appears at 2631–2633 (RGD). Proline 2655, proline 2658, and proline 2664 each carry 4-hydroxyproline. Positions 2695 to 2704 (GPPGVGGFPG) are enriched in gly residues. The nonhelical region (NC2) stretch occupies residues 2776-2944 (LTEDDIRDFV…GVHSQKTGAA (169 aa)). One can recognise a BPTI/Kunitz inhibitor domain in the interval 2879-2931 (CSLPLDEGSCTAYTLRWYHRAVPGGTACHPFVYGGCGGNANRFGTREACERRC). 3 disulfides stabilise this stretch: cysteine 2879-cysteine 2931, cysteine 2888-cysteine 2914, and cysteine 2906-cysteine 2927.

As to quaternary structure, homotrimer. Interacts with MIA3/TANGO1; facilitating its loading into transport carriers and subsequent secretion. Prolines at the third position of the tripeptide repeating unit (G-X-Y) are hydroxylated in some or all of the chains.

The protein localises to the secreted. It localises to the extracellular space. The protein resides in the extracellular matrix. Its subcellular location is the basement membrane. Stratified squamous epithelial basement membrane protein that forms anchoring fibrils which may contribute to epithelial basement membrane organization and adherence by interacting with extracellular matrix (ECM) proteins such as type IV collagen. The sequence is that of Collagen alpha-1(VII) chain from Mus musculus (Mouse).